The primary structure comprises 470 residues: Pyoverdine export outer membrane protein OpmQ (470 aa).

The signal sequence occupies residues 1 to 18 (MTLPRHLCLLPLSLSLLA). The N-palmitoyl cysteine moiety is linked to residue cysteine 19. Cysteine 19 is lipidated: S-diacylglycerol cysteine.

The protein belongs to the outer membrane factor (OMF) (TC 1.B.17) family. As to quaternary structure, part of the tripartite efflux system PvdRT-OpmQ, which is composed of an inner membrane component with both ATPase and permease domains, PvdT, a periplasmic membrane fusion protein, PvdR, and an outer membrane component, OpmQ.

Its subcellular location is the cell outer membrane. Its function is as follows. Part of the tripartite efflux system PvdRT-OpmQ required for the secretion into the extracellular milieu of the siderophore pyoverdine (PVD), which is involved in iron acquisition. The system is responsible for export of newly synthesized PVD after the final steps of biosynthesis have taken place in the periplasm. It is also responsible for recycling of PVD after internalization of ferri-PVD into the periplasm by the outer-membrane receptor FpvA and release of iron from PVD, thus making PVD available for new cycles of iron uptake. Contributes to resistance against ampicillin. This chain is Pyoverdine export outer membrane protein OpmQ, found in Pseudomonas putida (strain ATCC 47054 / DSM 6125 / CFBP 8728 / NCIMB 11950 / KT2440).